A 208-amino-acid polypeptide reads, in one-letter code: MQHLAVFGGTFDPIHWGHLLIAEAALQQIPIEKVIWVPSLNPPHKKASAFRHRLAMLQLATQDNPAFTVSSVEKNRSGVSYAINTLTDLSVCFPNTHWYWIVGLDTFQTLPRWYRGQELAPMCDWLIAPRLVGGENIAQSELICKQVKQQLRKQSDTIHWHLLHIPLVGVSSSLIRKLYRIGKSIRYLVPEDVRSYIAAHKLYSEDSE.

This sequence belongs to the NadD family.

It carries out the reaction nicotinate beta-D-ribonucleotide + ATP + H(+) = deamido-NAD(+) + diphosphate. It functions in the pathway cofactor biosynthesis; NAD(+) biosynthesis; deamido-NAD(+) from nicotinate D-ribonucleotide: step 1/1. In terms of biological role, catalyzes the reversible adenylation of nicotinate mononucleotide (NaMN) to nicotinic acid adenine dinucleotide (NaAD). The protein is Probable nicotinate-nucleotide adenylyltransferase of Nostoc sp. (strain PCC 7120 / SAG 25.82 / UTEX 2576).